A 304-amino-acid chain; its full sequence is Ornithine carbamoyltransferase (304 aa).

Carbamoyl phosphate-binding positions include 47 to 50 (STRT), arginine 98, and 125 to 128 (HPCQ). L-ornithine is bound by residues asparagine 156, aspartate 221, and 225 to 226 (SM). Residues 262–263 (CL) and arginine 290 each bind carbamoyl phosphate.

It belongs to the aspartate/ornithine carbamoyltransferase superfamily. OTCase family.

Its subcellular location is the cytoplasm. It catalyses the reaction carbamoyl phosphate + L-ornithine = L-citrulline + phosphate + H(+). The protein operates within amino-acid biosynthesis; L-arginine biosynthesis; L-arginine from L-ornithine and carbamoyl phosphate: step 1/3. Reversibly catalyzes the transfer of the carbamoyl group from carbamoyl phosphate (CP) to the N(epsilon) atom of ornithine (ORN) to produce L-citrulline. This chain is Ornithine carbamoyltransferase, found in Methanococcus maripaludis (strain C7 / ATCC BAA-1331).